Consider the following 364-residue polypeptide: Mannose-1-phosphate guanyltransferase (364 aa).

This sequence belongs to the transferase hexapeptide repeat family.

The protein resides in the cytoplasm. It catalyses the reaction alpha-D-mannose 1-phosphate + GTP + H(+) = GDP-alpha-D-mannose + diphosphate. It functions in the pathway nucleotide-sugar biosynthesis; GDP-alpha-D-mannose biosynthesis; GDP-alpha-D-mannose from alpha-D-mannose 1-phosphate (GTP route): step 1/1. Functionally, involved in cell wall synthesis where it is required for glycosylation. Involved in cell cycle progression through cell-size checkpoint. The polypeptide is Mannose-1-phosphate guanyltransferase (mpg1) (Hypocrea jecorina (Trichoderma reesei)).